Reading from the N-terminus, the 121-residue chain is Large ribosomal subunit protein bL12 (121 aa).

Belongs to the bacterial ribosomal protein bL12 family. As to quaternary structure, homodimer. Part of the ribosomal stalk of the 50S ribosomal subunit. Forms a multimeric L10(L12)X complex, where L10 forms an elongated spine to which 2 to 4 L12 dimers bind in a sequential fashion. Binds GTP-bound translation factors.

Functionally, forms part of the ribosomal stalk which helps the ribosome interact with GTP-bound translation factors. Is thus essential for accurate translation. The protein is Large ribosomal subunit protein bL12 of Acinetobacter baylyi (strain ATCC 33305 / BD413 / ADP1).